The following is a 399-amino-acid chain: Coenzyme A biosynthesis bifunctional protein CoaBC (399 aa).

The phosphopantothenoylcysteine decarboxylase stretch occupies residues 1-190 (MQTLAGKKIL…FQPKVLEGKS (190 aa)). The active-site Proton donor is Cys159. Residues 191-399 (ILISAGPTRE…KILEKMRELM (209 aa)) are phosphopantothenate--cysteine ligase. CTP contacts are provided by residues Asp279, Lys289, 307–310 (PDIV), Phe326, Lys340, and Lys344.

The protein in the N-terminal section; belongs to the HFCD (homo-oligomeric flavin containing Cys decarboxylase) superfamily. It in the C-terminal section; belongs to the PPC synthetase family. It depends on Mg(2+) as a cofactor. The cofactor is FMN.

The enzyme catalyses N-[(R)-4-phosphopantothenoyl]-L-cysteine + H(+) = (R)-4'-phosphopantetheine + CO2. It catalyses the reaction (R)-4'-phosphopantothenate + L-cysteine + CTP = N-[(R)-4-phosphopantothenoyl]-L-cysteine + CMP + diphosphate + H(+). Its pathway is cofactor biosynthesis; coenzyme A biosynthesis; CoA from (R)-pantothenate: step 2/5. It functions in the pathway cofactor biosynthesis; coenzyme A biosynthesis; CoA from (R)-pantothenate: step 3/5. Catalyzes two sequential steps in the biosynthesis of coenzyme A. In the first step cysteine is conjugated to 4'-phosphopantothenate to form 4-phosphopantothenoylcysteine. In the second step the latter compound is decarboxylated to form 4'-phosphopantotheine. The sequence is that of Coenzyme A biosynthesis bifunctional protein CoaBC from Vibrio parahaemolyticus serotype O3:K6 (strain RIMD 2210633).